The primary structure comprises 1154 residues: Kinesin-like protein KIN-7E, chloroplastic (1154 aa).

Low complexity-rich tracts occupy residues 1-14 (MSSS…SISP) and 29-109 (VAAA…PPVA). Residues 1 to 21 (MSSSSRPGRASISPFRSRRTS) constitute a chloroplast transit peptide. Residues 1-109 (MSSSSRPGRA…RAAGRAPPVA (109 aa)) form a disordered region. The Kinesin motor domain maps to 119-437 (NIMVTVRFRP…LKFAHRSKHI (319 aa)). 199–206 (GVTSSGKT) provides a ligand contact to ATP. A coiled-coil region spans residues 441–523 (ASQNKIIDEK…AALMGRIQRL (83 aa)). Residues 620-674 (LSTSVDSESTASGSPSFSRSSQQKHPLLDLKDGRRKSMTRKGDDPALTDSFPGRT) form a disordered region. The span at 628-640 (STASGSPSFSRSS) shows a compositional bias: low complexity. Coiled coils occupy residues 734 to 761 (DSQI…LEQR) and 801 to 845 (ADNR…DNVA). The disordered stretch occupies residues 838–885 (AKNEDNVASMQSSEPSSTSSNPRDLANEVASHSKMPSRTTEDHTESPL). Low complexity predominate over residues 846–857 (SMQSSEPSSTSS). Positions 894 to 967 (AEIENLKLDK…DLAAAKDQTR (74 aa)) form a coiled coil.

Belongs to the TRAFAC class myosin-kinesin ATPase superfamily. Kinesin family. KIN-7 subfamily.

The protein resides in the plastid. It is found in the chloroplast. This Oryza sativa subsp. japonica (Rice) protein is Kinesin-like protein KIN-7E, chloroplastic.